The chain runs to 525 residues: GMP synthase [glutamine-hydrolyzing] (525 aa).

Positions 9–207 (RILILDFGSQ…VRDICQCEAL (199 aa)) constitute a Glutamine amidotransferase type-1 domain. The active-site Nucleophile is the Cys-86. Active-site residues include His-181 and Glu-183. In terms of domain architecture, GMPS ATP-PPase spans 208–400 (WTPAKIIDDA…LGLPYDMLYR (193 aa)). ATP is bound at residue 235–241 (SGGVDSS).

Homodimer.

It catalyses the reaction XMP + L-glutamine + ATP + H2O = GMP + L-glutamate + AMP + diphosphate + 2 H(+). It functions in the pathway purine metabolism; GMP biosynthesis; GMP from XMP (L-Gln route): step 1/1. Functionally, catalyzes the synthesis of GMP from XMP. The chain is GMP synthase [glutamine-hydrolyzing] from Escherichia coli O127:H6 (strain E2348/69 / EPEC).